A 167-amino-acid chain; its full sequence is Small ribosomal subunit protein uS5 (167 aa).

The 64-residue stretch at 11–74 (LQEKLIAVNR…EKARRAMINV (64 aa)) folds into the S5 DRBM domain.

This sequence belongs to the universal ribosomal protein uS5 family. As to quaternary structure, part of the 30S ribosomal subunit. Contacts proteins S4 and S8.

In terms of biological role, with S4 and S12 plays an important role in translational accuracy. Functionally, located at the back of the 30S subunit body where it stabilizes the conformation of the head with respect to the body. This Serratia proteamaculans (strain 568) protein is Small ribosomal subunit protein uS5.